A 307-amino-acid polypeptide reads, in one-letter code: uncharacterized protein (307 aa).

To B.burgdorferi BB0340.

This is an uncharacterized protein from Treponema pallidum (strain Nichols).